Here is a 144-residue protein sequence, read N- to C-terminus: MWLQNLLFLGIVVYSFSAPTRSPNPVTRPWKHVDAIKEALSLLNDMRALENEKNEDVDIISNEFSIQRPTCVQTRLKLYKQGLRGNLTKLNGALTMIASHYQTNCPPTPETDCEIEVTTFEDFIKNLKGFLFDIPFDCWKPVQK.

The first 17 residues, Met1–Ser17, serve as a signal peptide directing secretion. O-linked (GalNAc...) serine glycosylation is present at Ser22. The O-linked (GalNAc...) threonine glycan is linked to Thr27. Cystine bridges form between Cys71–Cys113 and Cys105–Cys138. Residue Asn86 is glycosylated (N-linked (GlcNAc...) asparagine).

It belongs to the GM-CSF family. In terms of assembly, monomer. The signaling GM-CSF receptor complex is a dodecamer of two head-to-head hexamers of two alpha, two beta, and two ligand subunits.

It is found in the secreted. Cytokine that stimulates the growth and differentiation of hematopoietic precursor cells from various lineages, including granulocytes, macrophages, eosinophils and erythrocytes. In Rattus norvegicus (Rat), this protein is Granulocyte-macrophage colony-stimulating factor (Csf2).